The sequence spans 279 residues: Acetyl-coenzyme A carboxylase carboxyl transferase subunit beta (279 aa).

Residues 23-279 enclose the CoA carboxyltransferase N-terminal domain; that stretch reads LWWKCEECGA…LTTLLSLMKL (257 aa). Zn(2+) is bound by residues Cys-27, Cys-30, Cys-46, and Cys-49. Residues 27–49 form a C4-type zinc finger; it reads CEECGAALHKKQMEASDHTCPQC.

Belongs to the AccD/PCCB family. In terms of assembly, acetyl-CoA carboxylase is a heterohexamer composed of biotin carboxyl carrier protein (AccB), biotin carboxylase (AccC) and two subunits each of ACCase subunit alpha (AccA) and ACCase subunit beta (AccD). Requires Zn(2+) as cofactor.

The protein localises to the cytoplasm. It catalyses the reaction N(6)-carboxybiotinyl-L-lysyl-[protein] + acetyl-CoA = N(6)-biotinyl-L-lysyl-[protein] + malonyl-CoA. Its pathway is lipid metabolism; malonyl-CoA biosynthesis; malonyl-CoA from acetyl-CoA: step 1/1. Its function is as follows. Component of the acetyl coenzyme A carboxylase (ACC) complex. Biotin carboxylase (BC) catalyzes the carboxylation of biotin on its carrier protein (BCCP) and then the CO(2) group is transferred by the transcarboxylase to acetyl-CoA to form malonyl-CoA. This is Acetyl-coenzyme A carboxylase carboxyl transferase subunit beta from Chlorobium chlorochromatii (strain CaD3).